Consider the following 708-residue polypeptide: Retrotransposon-derived protein PEG10 (708 aa).

The stretch at 1-50 (MTERRRDELSEEINNLREKVMKQSEENNNLQSQVQKLTEENTTLREQVEP) forms a coiled coil. The disordered stretch occupies residues 21–74 (MKQSEENNNLQSQVQKLTEENTTLREQVEPTPEDEDDDIELRGAAAAAAPPPPI). Over residues 26-36 (ENNNLQSQVQK) the composition is skewed to polar residues. A compositionally biased stretch (basic and acidic residues) spans 37–48 (LTEENTTLREQV). The interval 76–275 (EECPEDLPEK…HQVDPTEPVG (200 aa)) is necessary for interaction with ACVRL1. A CCHC-type zinc finger spans residues 293 to 310 (NLCLYCGTGGHYADNCPA). The disordered stretch occupies residues 310 to 344 (AKASKSSPAGKLPGPAVEGPSATGPEIIRSPQDDA). Glycyl lysine isopeptide (Lys-Gly) (interchain with G-Cter in ubiquitin) cross-links involve residues lysine 311 and lysine 314. 2 positions are modified to phosphoserine: serine 316 and leucine 321. Omega-N-methylarginine is present on residues arginine 507, arginine 598, and arginine 611. The disordered stretch occupies residues 683-708 (PVPQYPPPQPPPPPPPPPPPPSYSTL).

In terms of assembly, homooligomer; homooligomerizes into virion-like capsids. Interacts with ACVRL1. Interacts with SIAH1 and SIAH2. Post-translationally, undergoes proteolytic cleavage. In terms of tissue distribution, expressed in the cytotrophoblast layer but not in the overlying syncytiotrophoblast of the placenta. Expressed in prostate and breast carcinomas but not in normal breast and prostate epithelial cells. Expressed in the Hep-G2 cell line (at protein level). Expressed in brain, liver, spleen, kidney, thymus, lung, ovary, testis, reactive lymph node, skeletal muscle, adipose tissue and placenta. Expressed in pancreatic and hepatocellular carcinomas (HCC).

The protein localises to the extracellular vesicle membrane. The protein resides in the cytoplasm. It is found in the nucleus. In terms of biological role, retrotransposon-derived protein that binds its own mRNA and self-assembles into virion-like capsids. Forms virion-like extracellular vesicles that encapsulate their own mRNA and are released from cells, enabling intercellular transfer of PEG10 mRNA. Binds its own mRNA in the 5'-UTR region, in the region near the boundary between the nucleocapsid (NC) and protease (PRO) coding sequences and in the beginning of the 3'-UTR region. Involved in placenta formation: required for trophoblast stem cells differentiation. Involved at the immediate early stage of adipocyte differentiation. Overexpressed in many cancers and enhances tumor progression: promotes cell proliferation by driving cell cycle progression from G0/G1. Enhances cancer progression by inhibiting the TGF-beta signaling, possibly via interaction with the TGF-beta receptor ACVRL1. May bind to the 5'-GCCTGTCTTT-3' DNA sequence of the MB1 domain in the myelin basic protein (MBP) promoter; additional evidences are however required to confirm this result. This is Retrotransposon-derived protein PEG10 from Homo sapiens (Human).